Here is a 194-residue protein sequence, read N- to C-terminus: Peptidyl-tRNA hydrolase (194 aa).

A tRNA-binding site is contributed by tyrosine 17. Histidine 22 (proton acceptor) is an active-site residue. The tRNA site is built by phenylalanine 68, asparagine 70, and asparagine 116.

The protein belongs to the PTH family. Monomer.

It is found in the cytoplasm. It carries out the reaction an N-acyl-L-alpha-aminoacyl-tRNA + H2O = an N-acyl-L-amino acid + a tRNA + H(+). In terms of biological role, hydrolyzes ribosome-free peptidyl-tRNAs (with 1 or more amino acids incorporated), which drop off the ribosome during protein synthesis, or as a result of ribosome stalling. Catalyzes the release of premature peptidyl moieties from peptidyl-tRNA molecules trapped in stalled 50S ribosomal subunits, and thus maintains levels of free tRNAs and 50S ribosomes. The sequence is that of Peptidyl-tRNA hydrolase from Actinobacillus succinogenes (strain ATCC 55618 / DSM 22257 / CCUG 43843 / 130Z).